Here is a 256-residue protein sequence, read N- to C-terminus: Ras-related protein Rab-26 (256 aa).

The interval 1–51 (MSRKKTPKSKGASTPAASTLPTANGARPARSGTALSGPDAPPNGPLQPGRP) is disordered. The span at 12–23 (ASTPAASTLPTA) shows a compositional bias: low complexity. GTP contacts are provided by Ser-72, Gly-73, Val-74, Gly-75, Lys-76, Thr-77, Cys-78, Ser-95, and Thr-96. Thr-77 provides a ligand contact to Mg(2+). Short sequence motifs (switch) lie at residues 86–101 (GAFL…GIDF) and 119–136 (DTAG…YYRD). Positions 96 and 119 each coordinate Mg(2+). The GTP site is built by Gly-122, Asn-177, Lys-178, Asp-180, Ala-208, and Lys-209. 2 S-geranylgeranyl cysteine lipidation sites follow: Cys-253 and Cys-254.

The protein belongs to the small GTPase superfamily. Rab family. Interacts with RIMS1. Interacts with ADRA2B. Requires Mg(2+) as cofactor. As to expression, predominantly expressed in brain.

Its subcellular location is the golgi apparatus membrane. The protein localises to the cytoplasmic vesicle. It localises to the secretory vesicle membrane. The catalysed reaction is GTP + H2O = GDP + phosphate + H(+). With respect to regulation, regulated by guanine nucleotide exchange factors (GEFs) which promote the exchange of bound GDP for free GTP. Regulated by GTPase activating proteins (GAPs) which increase the GTP hydrolysis activity. Inhibited by GDP dissociation inhibitors (GDIs). In terms of biological role, the small GTPases Rab are key regulators of intracellular membrane trafficking, from the formation of transport vesicles to their fusion with membranes. Rabs cycle between an inactive GDP-bound form and an active GTP-bound form that is able to recruit to membranes different set of downstream effectors directly responsible for vesicle formation, movement, tethering and fusion. RAB26 mediates transport of ADRA2A and ADRA2B from the Golgi to the cell membrane. Plays a role in the maturation of zymogenic granules and in pepsinogen secretion in the stomach. Plays a role in the secretion of amylase from acinar granules in the parotid gland. This is Ras-related protein Rab-26 from Homo sapiens (Human).